The chain runs to 24 residues: Citropin-3.1.2 (24 aa).

In terms of tissue distribution, expressed by the dorsal and submental skin glands.

The protein resides in the secreted. The chain is Citropin-3.1.2 from Ranoidea citropa (Australian Blue Mountains tree frog).